The primary structure comprises 119 residues: uncharacterized protein (119 aa).

The next 2 helical transmembrane spans lie at 53–73 (AATI…SFLA) and 92–112 (FITH…WFLF).

The protein resides in the membrane. This is an uncharacterized protein from Saccharomyces cerevisiae (strain ATCC 204508 / S288c) (Baker's yeast).